We begin with the raw amino-acid sequence, 1866 residues long: MDPVGLQLGNKNLWSCLVRLLTKDPEWLNAKMKFFLPNTDLDSRNETLDPEQRVILQLNKLHVQGSDTWQSFIHCVCMQLEVPLDLEVLLLSTFGYDDGFTSQLGAEGKSQPESQLHHGLKRPHQSCGSSPRRKQCKKQQLELAKKYLQLLRTSAQQRYRSQIPGSGQPHAFHQVYVPPILRRATASLDTPEGAIMGDVKVEDGADVSISDLFNTRVNKGPRVTVLLGKAGMGKTTLAHRLCQKWAEGHLNCFQALFLFEFRQLNLITRFLTPSELLFDLYLSPESDHDTVFQYLEKNADQVLLIFDGLDEALQPMGPDGPGPVLTLFSHLCNGTLLPGCRVMATSRPGKLPACLPAEAAMVHMLGFDGPRVEEYVNHFFSAQPSREGALVELQTNGRLRSLCAVPALCQVACLCLHHLLPDHAPGQSVALLPNMTQLYMQMVLALSPPGHLPTSSLLDLGEVALRGLETGKVIFYAKDIAPPLIAFGATHSLLTSFCVCTGPGHQQTGYAFTHLSLQEFLAALHLMASPKVNKDTLTQYVTLHSRWVQRTKARLGLSDHLPTFLAGLASCTCRPFLSHLAQGNEDCVGAKQAAVVQVLKKLATRKLTGPKVVELCHCVDETQEPELASLTAQSLPYQLPFHNFPLTCTDLATLTNILEHREAPIHLDFDGCPLEPHCPEALVGCGQIENLSFKSRKCGDAFAEALSRSLPTMGRLQMLGLAGSKITARGISHLVKALPLCPQLKEVSFRDNQLSDQVVLNIVEVLPHLPRLRKLDLSSNSICVSTLLCLARVAVTCPTVRMLQAREADLIFLLSPPTETTAELQRAPDLQESDGQRKGAQSRSLTLRLQKCQLQVHDAEALIALLQEGPHLEEVDLSGNQLEDEGCRLMAEAASQLHIARKLDLSNNGLSVAGVHCVLRAVSACWTLAELHISLQHKTVIFMFAQEPEEQKGPQERAAFLDSLMLQMPSELPLSSRRMRLTHCGLQEKHLEQLCKALGGSCHLGHLHLDFSGNALGDEGAARLAQLLPGLGALQSLNLSENGLSLDAVLGLVRCFSTLQWLFRLDISFESQHILLRGDKTSRDMWATGSLPDFPAAAKFLGFRQRCIPRSLCLSECPLEPPSLTRLCATLKDCPGPLELQLSCEFLSDQSLETLLDCLPQLPQLSLLQLSQTGLSPKSPFLLANTLSLCPRVKKVDLRSLHHATLHFRSNEEEEGVCCGRFTGCSLSQEHVESLCWLLSKCKDLSQVDLSANLLGDSGLRCLLECLPQVPISGLLDLSHNSISQESALYLLETLPSCPRVREASVNLGSEQSFRIHFSREDQAGKTLRLSECSFRPEHVSRLATGLSKSLQLTELTLTQCCLGQKQLAILLSLVGRPAGLFSLRVQEPWADRARVLSLLEVCAQASGSVTEISISETQQQLCVQLEFPRQEENPEAVALRLAHCDLGAHHSLLVGQLMETCARLQQLSLSQVNLCEDDDASSLLLQSLLLSLSELKTFRLTSSCVSTEGLAHLASGLGHCHHLEELDLSNNQFDEEGTKALMRALEGKWMLKRLDLSHLLLNSSTLALLTHRLSQMTCLQSLRLNRNSIGDVGCCHLSEALRAATSLEELDLSHNQIGDAGVQHLATILPGLPELRKIDLSGNSISSAGGVQLAESLVLCRRLEELMLGCNALGDPTALGLAQELPQHLRVLHLPFSHLGPGGALSLAQALDGSPHLEEISLAENNLAGGVLRFCMELPLLRQIDLVSCKIDNQTAKLLTSSFTSCPALEVILLSWNLLGDEAAAELAQVLPQMGRLKRVDLEKNQITALGAWLLAEGLAQGSSIQVIRLWNNPIPCDMAQHLKSQEPRLDFAFFDNQPQAPWGT.

The tract at residues 105-135 (GAEGKSQPESQLHHGLKRPHQSCGSSPRRKQ) is disordered. Residues 222-539 (RVTVLLGKAG…PKVNKDTLTQ (318 aa)) form the NACHT domain. An ATP-binding site is contributed by 228–235 (GKAGMGKT). LRR repeat units follow at residues 599–622 (LKKL…VDET), 713–737 (MGRL…LVKA), 741–765 (CPQL…IVEV), 769–792 (LPRL…CLAR), 869–892 (GPHL…LMAE), 897–921 (LHIA…VLRA), 930–953 (ELHI…EQKG), 976–1000 (SRRM…ALGG), 1004–1026 (LGHL…RLAQ), 1031–1058 (LGAL…CFST), 1138–1161 (LELQ…CLPQ), 1162–1184 (LPQL…FLLA), 1242–1265 (CKDL…CLLE), 1272–1294 (ISGL…LLET), 1462–1488 (CARL…LLQS), 1493–1516 (LSEL…HLAS), 1521–1544 (CHHL…ALMR), 1554–1577 (RLDL…LSQM), 1578–1600 (TCLQ…HLSE), 1605–1628 (ATSL…HLAT), 1633–1656 (LPEL…QLAE), 1661–1684 (CRRL…GLAQ), 1687–1714 (PQHL…ALDG), 1715–1739 (SPHL…CMEL), 1741–1762 (LLRQ…LLTS), and 1795–1818 (MGRL…LLAE).

The protein belongs to the NLRP family. As to quaternary structure, interacts with CHUK and IKBKB; prevents CHUK and IKBKB phosphorylation and inhibits their kinase activity. Interacts with RIGI and IFIH1; blocks the interaction of MAVS to RIGI. In terms of tissue distribution, expressed in spleen, thymus, lung, brain, tonsil, heart and prostate.

The protein resides in the cytoplasm. In terms of biological role, probable regulator of the NF-kappa-B and type I interferon signaling pathways. May also regulate the type II interferon signaling pathway. Plays a role in homeostatic control of innate immunity and in antiviral defense mechanisms. The polypeptide is Protein NLRC5 (NLRC5) (Homo sapiens (Human)).